A 252-amino-acid polypeptide reads, in one-letter code: Imidazole glycerol phosphate synthase subunit HisF (252 aa).

Catalysis depends on residues D11 and D130.

This sequence belongs to the HisA/HisF family. Heterodimer of HisH and HisF.

The protein localises to the cytoplasm. The enzyme catalyses 5-[(5-phospho-1-deoxy-D-ribulos-1-ylimino)methylamino]-1-(5-phospho-beta-D-ribosyl)imidazole-4-carboxamide + L-glutamine = D-erythro-1-(imidazol-4-yl)glycerol 3-phosphate + 5-amino-1-(5-phospho-beta-D-ribosyl)imidazole-4-carboxamide + L-glutamate + H(+). The protein operates within amino-acid biosynthesis; L-histidine biosynthesis; L-histidine from 5-phospho-alpha-D-ribose 1-diphosphate: step 5/9. IGPS catalyzes the conversion of PRFAR and glutamine to IGP, AICAR and glutamate. The HisF subunit catalyzes the cyclization activity that produces IGP and AICAR from PRFAR using the ammonia provided by the HisH subunit. In Rhodospirillum rubrum (strain ATCC 11170 / ATH 1.1.1 / DSM 467 / LMG 4362 / NCIMB 8255 / S1), this protein is Imidazole glycerol phosphate synthase subunit HisF.